Here is a 320-residue protein sequence, read N- to C-terminus: MKRIGILTSGGDAPGMNAAIRAVVRKSIFDGIEVYGINYGFAGLVAGDIRRLDVADVGDKIQRGGTFLYSARYPEFATEEGQLKGIEQLKKFGIEGLVVIGGDGSYHGAMALTKRGFPAVGIPGTIDNDIPGTDFTIGFDTAINTVLESIDRIRDTATSHVRTFVIEVMGRNAGDIALWSGVAGGADEIIIPEHDFDMKNVAKRIQEGRDRGKKHCLIILAEGVMGGNEFADKLSEYGDFHTRVSILGHVVRGGSPSARDRVLASKFGSYAVELLKEGKGGLCIGMLDNQVVAADIIDTLENNKHKPDLSLYELNHEISF.

Residue Gly11 coordinates ATP. 21–25 (RAVVR) contributes to the ADP binding site. Residues 72–73 (RY) and 102–105 (GDGS) contribute to the ATP site. Asp103 contacts Mg(2+). 125-127 (TID) is a substrate binding site. Asp127 functions as the Proton acceptor in the catalytic mechanism. ADP is bound at residue Arg154. Substrate contacts are provided by residues Arg162 and 169–171 (MGR). Residues 185–187 (GAD), Arg211, and 213–215 (KKH) contribute to the ADP site. Substrate is bound by residues Glu222, Arg243, and 249–252 (HVVR).

This sequence belongs to the phosphofructokinase type A (PFKA) family. ATP-dependent PFK group I subfamily. Prokaryotic clade 'B1' sub-subfamily. Homotetramer. Mg(2+) serves as cofactor.

It is found in the cytoplasm. The catalysed reaction is beta-D-fructose 6-phosphate + ATP = beta-D-fructose 1,6-bisphosphate + ADP + H(+). The protein operates within carbohydrate degradation; glycolysis; D-glyceraldehyde 3-phosphate and glycerone phosphate from D-glucose: step 3/4. With respect to regulation, allosterically activated by ADP and other diphosphonucleosides, and allosterically inhibited by phosphoenolpyruvate. In terms of biological role, catalyzes the phosphorylation of D-fructose 6-phosphate to fructose 1,6-bisphosphate by ATP, the first committing step of glycolysis. This chain is ATP-dependent 6-phosphofructokinase, found in Enterococcus faecalis (strain ATCC 700802 / V583).